The chain runs to 644 residues: Acetyl-coenzyme A synthetase (644 aa).

CoA contacts are provided by residues 189–192 (RGGK) and T307. ATP contacts are provided by residues 383 to 385 (GEP), 407 to 412 (DTWWQT), D496, and R511. A CoA-binding site is contributed by S519. R522 is an ATP binding site. Positions 533, 535, and 538 each coordinate Mg(2+). R580 is a CoA binding site. Position 605 is an N6-acetyllysine (K605).

It belongs to the ATP-dependent AMP-binding enzyme family. Mg(2+) serves as cofactor. Post-translationally, acetylated. Deacetylation by the SIR2-homolog deacetylase activates the enzyme.

It carries out the reaction acetate + ATP + CoA = acetyl-CoA + AMP + diphosphate. Catalyzes the conversion of acetate into acetyl-CoA (AcCoA), an essential intermediate at the junction of anabolic and catabolic pathways. AcsA undergoes a two-step reaction. In the first half reaction, AcsA combines acetate with ATP to form acetyl-adenylate (AcAMP) intermediate. In the second half reaction, it can then transfer the acetyl group from AcAMP to the sulfhydryl group of CoA, forming the product AcCoA. The protein is Acetyl-coenzyme A synthetase of Rubrobacter xylanophilus (strain DSM 9941 / JCM 11954 / NBRC 16129 / PRD-1).